The chain runs to 215 residues: uncharacterized protein (215 aa).

Active-site charge relay system residues include Ser114, Asp162, and His194.

This sequence belongs to the AB hydrolase superfamily. AB hydrolase 2 family.

This is an uncharacterized protein from Rickettsia felis (strain ATCC VR-1525 / URRWXCal2) (Rickettsia azadi).